The following is a 518-amino-acid chain: Probable triacylglyceride transporter BCG_1471c (518 aa).

A run of 14 helical transmembrane segments spans residues 7 to 27 (VAIS…YVVV), 46 to 66 (RITW…PLLG), 76 to 96 (LMLQ…ALAG), 110 to 130 (IQGV…ADLW), 144 to 164 (AAQE…VWLL), 170 to 190 (VFWI…FSLP), 201 to 221 (VDLV…IGLY), 230 to 250 (VLPD…VAFF), 270 to 290 (PFLS…VTLV), 308 to 328 (AGML…GGWI), 337 to 357 (VAFA…HWPV), 379 to 401 (LVVA…LRVV), 408 to 428 (IASA…VAAL), and 475 to 495 (IFTI…LISG).

This sequence belongs to the major facilitator superfamily.

It localises to the cell inner membrane. With respect to regulation, inhibited by CCCP and valinomycin. In terms of biological role, in association with lipoprotein LprG probably transports triacylglycerides (TAG) across the inner cell membrane into the periplasm; TAG probably regulates lipid metabolism and growth regulation. Confers resistance to several drugs such as rifampicin, clofazimine and novobiocin; is also part of the oxidative stress response and is needed to maintain normal growth characteristics. Probably an efflux transporter, involved in maintaining correct cell wall permeability. Probably required with LprG for normal surface localization of lipoarabinomannan (LAM). Required for optimal growth on cholesterol. This is Probable triacylglyceride transporter BCG_1471c from Mycobacterium bovis (strain BCG / Pasteur 1173P2).